We begin with the raw amino-acid sequence, 532 residues long: Glucose-6-phosphate isomerase (532 aa).

E322 functions as the Proton donor in the catalytic mechanism. Residues H351 and K457 contribute to the active site.

This sequence belongs to the GPI family.

It localises to the cytoplasm. It carries out the reaction alpha-D-glucose 6-phosphate = beta-D-fructose 6-phosphate. Its pathway is carbohydrate biosynthesis; gluconeogenesis. It functions in the pathway carbohydrate degradation; glycolysis; D-glyceraldehyde 3-phosphate and glycerone phosphate from D-glucose: step 2/4. Catalyzes the reversible isomerization of glucose-6-phosphate to fructose-6-phosphate. The chain is Glucose-6-phosphate isomerase from Synechococcus sp. (strain JA-3-3Ab) (Cyanobacteria bacterium Yellowstone A-Prime).